The following is a 1173-amino-acid chain: WASH complex subunit 4 (1173 aa).

Residue Ala-2 is modified to N-acetylalanine. Ser-7 bears the Phosphoserine mark. Residues 705-1173 (KDLALFFSLN…STVSADPVVK (469 aa)) form a sufficient for interaction with WASHC5 region. Residues 1135–1161 (RADKTAAEENQEKKEKEEETKTSNGDL) adopt a coiled-coil conformation. Residues 1142–1155 (EENQEKKEKEEETK) show a composition bias toward basic and acidic residues. Residues 1142–1173 (EENQEKKEKEEETKTSNGDLSDSTVSADPVVK) are disordered. Thr-1154 is subject to Phosphothreonine. The segment covering 1157–1167 (SNGDLSDSTVS) has biased composition (polar residues).

It belongs to the SWIP family. In terms of assembly, component of the WASH core complex also described as WASH regulatory complex (SHRC) composed of WASH (WASHC1, WASH2P or WASH3P), WASHC2 (WASHC2A or WASHC2C), WASHC3, WASHC4 and WASHC5. The WASH core complex associates via WASHC2 with the F-actin-capping protein dimer (formed by CAPZA1, CAPZA2 or CAPZA3 and CAPZB) in a transient or substoichiometric manner which was initially described as WASH complex.

The protein resides in the early endosome. Its function is as follows. Acts as a component of the WASH core complex that functions as a nucleation-promoting factor (NPF) at the surface of endosomes, where it recruits and activates the Arp2/3 complex to induce actin polymerization, playing a key role in the fission of tubules that serve as transport intermediates during endosome sorting. In Homo sapiens (Human), this protein is WASH complex subunit 4.